A 354-amino-acid chain; its full sequence is Envelope protein US28 (354 aa).

At 1–37 (MTPTTTTAELTTEFDYDEDATPCVFTDVLNQSKPVTL) the chain is on the extracellular side. The N-linked (GlcNAc...) asparagine; by host glycan is linked to asparagine 30. Residues 38 to 58 (FLYGVVFLFGSIGNFLVIFTI) traverse the membrane as a helical segment. At 59–69 (TWRRRIQCSGD) the chain is on the cytoplasmic side. The helical transmembrane segment at 70 to 90 (VYFINLAAADLLFVCTLPLWM) threads the bilayer. The Extracellular segment spans residues 91–101 (QYLLDHNSLAS). The helical transmembrane segment at 102–122 (VPCTLLTACFYVAMFASLCFI) threads the bilayer. Residues 123–145 (TEIALDRYYAIVYMRYRPVKQAC) are Cytoplasmic-facing. A helical transmembrane segment spans residues 146 to 166 (LFSIFWWIFAVIIAIPHFMVV). The Extracellular portion of the chain corresponds to 167–183 (TKKDNQCMTDYDYLEVS). Residues 184–204 (YPIILNVELMLGAFVIPLSVI) traverse the membrane as a helical segment. Over 205–228 (SYCYYRISRIVAVSQSRHKGRIVR) the chain is Cytoplasmic. The helical transmembrane segment at 229-249 (VLIAVVLVFIIFWLPYHLTLF) threads the bilayer. The Extracellular portion of the chain corresponds to 250–273 (VDTLKLLKWISSSCEFERSLKRAL). The chain crosses the membrane as a helical span at residues 274–294 (ILTESLAFCHCCLNPLLYVFV). Residues 295-354 (GTKFRQELHCLLAEFRQRLFSRDVSWYHSMSFSRRGSPSRRETSSDTLSDEVCRVSQIIP) are Cytoplasmic-facing.

The protein belongs to the G-protein coupled receptor 1 family. In terms of assembly, interacts with host GPRASP1; this interaction targets US28 to lysosomes for degradation. Interacts with host CX3CL1/Fractalkine (via N-terminus). In terms of processing, phosphorylated. High phosphorylation occurs concomitantly with receptor endocytosis and correlate with low receptor presence at the plasma membrane.

The protein localises to the host cell membrane. Its function is as follows. Receptor for a C-C type chemokine. Binds to a great number of different CC-chemokines including CCL5/RANTES, CCL2/MCP-1, CCL3/MIP-1-alpha as well as CX3CL1/Fractalkine. Transduces signals resulting in the activation of MAP kinase signaling pathways and augmentation of intracellular calcium ion levels, leading to alterations in chemotactic behavior of vascular smooth muscle cells and macrophages. The US28 receptor also exhibits high levels of agonist-independent signaling activity and agonist-independent endocytosis. Interacts with the host Gi complex without activating it, thereby probably interfering with the chemokine-Gi signaling. May also function as a G protein sink to sequester G protein from the cell surface via internalization. Interacts with endogenous Gaq/11 subunits and thereby constitutively activates phospholipase C. The polypeptide is Envelope protein US28 (US28) (Human cytomegalovirus (strain Merlin) (HHV-5)).